A 251-amino-acid polypeptide reads, in one-letter code: Probable transcriptional regulatory protein RSal33209_2002 (251 aa).

It belongs to the TACO1 family.

The protein localises to the cytoplasm. In Renibacterium salmoninarum (strain ATCC 33209 / DSM 20767 / JCM 11484 / NBRC 15589 / NCIMB 2235), this protein is Probable transcriptional regulatory protein RSal33209_2002.